The following is a 180-amino-acid chain: Prothoracicotropic hormone (180 aa).

Positions 1-15 (MKLLILCVMVHGLLA) are cleaved as a signal peptide. A propeptide spanning residues 16 to 64 (EGPGQVLWKEQVVAPEFLLDDREDIASNRNAFFYEDKRSFRPEGLGEQV) is cleaved from the precursor. 2 disulfide bridges follow: cysteine 88–cysteine 123 and cysteine 111–cysteine 175.

As to quaternary structure, homodimer; disulfide-linked.

The protein resides in the secreted. Functionally, PTTH is a brain secretory polypeptide of insects which stimulates the prothoracic glands to produce and release ecdysone, the steroid essential to insect development. The polypeptide is Prothoracicotropic hormone (Camponotus floridanus (Florida carpenter ant)).